We begin with the raw amino-acid sequence, 134 residues long: Acyl carrier protein, chloroplastic (134 aa).

The N-terminal 51 residues, 1-51 (MATTFSASVSTLATSLATPTRISFQKPALVSRTNLSFNLRRSIPTRLSVSC), are a transit peptide targeting the chloroplast. Positions 55–130 (PETIEKVSKI…EAAELIEELV (76 aa)) constitute a Carrier domain. Residue S90 is modified to O-(pantetheine 4'-phosphoryl)serine.

This sequence belongs to the acyl carrier protein (ACP) family. 4'-phosphopantetheine is transferred from CoA to a specific serine of apo-ACP by acpS. This modification is essential for activity because fatty acids are bound in thioester linkage to the sulfhydryl of the prosthetic group. In terms of tissue distribution, seed.

The protein resides in the plastid. It localises to the chloroplast. It functions in the pathway lipid metabolism; fatty acid biosynthesis. Carrier of the growing fatty acid chain in fatty acid biosynthesis. This chain is Acyl carrier protein, chloroplastic (ACL1.A3), found in Brassica napus (Rape).